Reading from the N-terminus, the 828-residue chain is Periplasmic nitrate reductase (828 aa).

Positions 1-31 (MKLSRRSFMKANAVAAAAAAAGLSVPGVARA) form a signal peptide, tat-type signal. The 57-residue stretch at 39–95 (IKWDKAPCRFCGTGCGVLVGTQQGRVVACQGDPDAPVNRGLNCIKGYFLPKIMYGKD) folds into the 4Fe-4S Mo/W bis-MGD-type domain. Positions 46, 49, 53, and 81 each coordinate [4Fe-4S] cluster. Mo-bis(molybdopterin guanine dinucleotide) contacts are provided by residues lysine 83, glutamine 150, asparagine 175, cysteine 179, 212 to 219 (WGSNMAEM), 243 to 247 (STFQH), 262 to 264 (QSD), methionine 372, glutamine 376, asparagine 482, 508 to 509 (SD), lysine 531, aspartate 558, and 718 to 727 (TGRVLEHWHT). Phenylalanine 794 contacts substrate. Asparagine 802 and lysine 819 together coordinate Mo-bis(molybdopterin guanine dinucleotide).

This sequence belongs to the prokaryotic molybdopterin-containing oxidoreductase family. NasA/NapA/NarB subfamily. Component of the periplasmic nitrate reductase NapAB complex composed of NapA and NapB. The cofactor is [4Fe-4S] cluster. Requires Mo-bis(molybdopterin guanine dinucleotide) as cofactor. Post-translationally, predicted to be exported by the Tat system. The position of the signal peptide cleavage has not been experimentally proven.

It is found in the periplasm. It carries out the reaction 2 Fe(II)-[cytochrome] + nitrate + 2 H(+) = 2 Fe(III)-[cytochrome] + nitrite + H2O. Functionally, catalytic subunit of the periplasmic nitrate reductase complex NapAB. Receives electrons from NapB and catalyzes the reduction of nitrate to nitrite. The chain is Periplasmic nitrate reductase from Salmonella agona (strain SL483).